Reading from the N-terminus, the 80-residue chain is Toxin-like peptide AaF1CA1 (80 aa).

A signal peptide spans 1 to 22; that stretch reads MMKLVLFSVIVILFSLIGSIHG. The 56-residue stretch at 25 to 80 folds into the LCN-type CS-alpha/beta domain; that stretch reads VPGNYPLRPFRYRYGCAVPGDSDYCVRVCRKHGVRYGYCWFFTCWCEYLEDKNIKI. 3 cysteine pairs are disulfide-bonded: C40/C63, C49/C68, and C53/C70.

It belongs to the long (3 C-C) scorpion toxin superfamily. In terms of tissue distribution, expressed by the venom gland.

The protein localises to the secreted. Functionally, probable ion channel inhibitor. This is Toxin-like peptide AaF1CA1 from Androctonus australis (Sahara scorpion).